Consider the following 306-residue polypeptide: Serine/threonine-protein kinase KIN28 (306 aa).

Positions 7–290 (YTKEKKVGEG…AVQCLESDYF (284 aa)) constitute a Protein kinase domain. ATP contacts are provided by residues 13 to 21 (VGEGTYAVV) and Lys-36. Asp-129 functions as the Proton acceptor in the catalytic mechanism. Position 162 is a phosphothreonine; by CAK (Thr-162).

The protein belongs to the protein kinase superfamily. CMGC Ser/Thr protein kinase family. CDC2/CDKX subfamily. As to quaternary structure, CCL1 and KIN28 form the TFIIK complex, a component of the TFIIH holo complex. Component of a complex consisting of KIN28, CCL1 and TFB3. Interacts with TFB3. Also interacts with HNT1 and HOG1. Post-translationally, phosphorylation of Thr-162 regulates the affinity of interaction between CCL1, KIN28 and TFB3. Thr-162 phosphorylation does not vary through the cell cycle and is necessary for full kinase activity.

The protein localises to the nucleus. The enzyme catalyses [DNA-directed RNA polymerase] + ATP = phospho-[DNA-directed RNA polymerase] + ADP + H(+). Catalytic component of the TFIIK complex (KIN28-CCL1 dimer) which is the protein kinase component of transcription factor IIH (TFIIH) and phosphorylates the C-terminal domain of RNA polymerase II during transition from transcription to elongation after preinitiation complex (PIC) formation, thereby positively regulating transcription. TFIIH (or factor B) is essential for both basal and activated transcription, and is involved in nucleotide excision repair (NER) of damaged DNA. TFIIH has DNA-dependent ATPase activity and is essential for polymerase II transcription in vitro. Essential for cell proliferation. This chain is Serine/threonine-protein kinase KIN28 (KIN28), found in Saccharomyces cerevisiae (strain ATCC 204508 / S288c) (Baker's yeast).